Reading from the N-terminus, the 244-residue chain is Cell division protein ZapD (244 aa).

The protein belongs to the ZapD family. As to quaternary structure, interacts with FtsZ.

The protein localises to the cytoplasm. Cell division factor that enhances FtsZ-ring assembly. Directly interacts with FtsZ and promotes bundling of FtsZ protofilaments, with a reduction in FtsZ GTPase activity. The polypeptide is Cell division protein ZapD (Shewanella baltica (strain OS223)).